Reading from the N-terminus, the 275-residue chain is MLDIFKAVILGIVEGITEFLPISSTGHLVLVDEFIKMQQSTQFTDMFNVVIQLGAIMAVVVLYFHKLNPLSPRKDTTEKRNTWVLWSKVLLAVIPSVIVGLPLNDWMDEHLMNWAVVSATLIIYGVLFIVIENHNKRLTPRFANLQTLPYTTALFIGCFQLLSLIPGTSRSGATILGAILIGTSRYVATEFSFFMAIPTMFGASLLKLVKFFAHGGSLAGLQGAVLAVGVIVSFVVAYLSIRFLLDYIKKNDFKAFGWYRIVLGVLVIGYFTLIH.

8 consecutive transmembrane segments (helical) span residues 2–22, 43–63, 83–103, 111–131, 147–167, 186–206, 221–241, and 255–275; these read LDIF…FLPI, FTDM…VVLY, WVLW…GLPL, LMNW…FIVI, TLPY…LIPG, YVAT…ASLL, LQGA…YLSI, and AFGW…TLIH.

This sequence belongs to the UppP family.

It localises to the cell membrane. It carries out the reaction di-trans,octa-cis-undecaprenyl diphosphate + H2O = di-trans,octa-cis-undecaprenyl phosphate + phosphate + H(+). Its function is as follows. Catalyzes the dephosphorylation of undecaprenyl diphosphate (UPP). Confers resistance to bacitracin. The protein is Undecaprenyl-diphosphatase of Lactiplantibacillus plantarum (strain ATCC BAA-793 / NCIMB 8826 / WCFS1) (Lactobacillus plantarum).